Reading from the N-terminus, the 155-residue chain is 3-hydroxyacyl-[acyl-carrier-protein] dehydratase FabZ (155 aa).

Histidine 58 is a catalytic residue.

The protein belongs to the thioester dehydratase family. FabZ subfamily.

It localises to the cytoplasm. The enzyme catalyses a (3R)-hydroxyacyl-[ACP] = a (2E)-enoyl-[ACP] + H2O. Functionally, involved in unsaturated fatty acids biosynthesis. Catalyzes the dehydration of short chain beta-hydroxyacyl-ACPs and long chain saturated and unsaturated beta-hydroxyacyl-ACPs. This Alkalilimnicola ehrlichii (strain ATCC BAA-1101 / DSM 17681 / MLHE-1) protein is 3-hydroxyacyl-[acyl-carrier-protein] dehydratase FabZ.